Reading from the N-terminus, the 158-residue chain is uncharacterized protein (158 aa).

The next 2 membrane-spanning stretches (helical) occupy residues leucine 10–valine 30 and isoleucine 137–phenylalanine 157.

It is found in the cell membrane. This is an uncharacterized protein from Bacillus subtilis (strain 168).